We begin with the raw amino-acid sequence, 873 residues long: DNA mismatch repair protein PMS1 (873 aa).

The interval 1 to 357 (MTQIHQINDI…FKTTLSDYYN (357 aa)) is DNA- and ATP-binding. Over residues 379–402 (LKTEVFDDRSTTHESDNENYHTAR) the composition is skewed to basic and acidic residues. Residues 379-423 (LKTEVFDDRSTTHESDNENYHTARSESNQSNHAHFNSTTGVIDKS) form a disordered region. Ser-393 bears the Phosphoserine mark. The span at 403-423 (SESNQSNHAHFNSTTGVIDKS) shows a compositional bias: polar residues. Ser-566 is modified (phosphoserine). An interaction with MLH1 region spans residues 661 to 873 (YLTLTVSKND…WSSFSKDYEI (213 aa)).

It belongs to the DNA mismatch repair MutL/HexB family. As to quaternary structure, heterodimer of MLH1 and PMS1, called MutLalpha, which is the major MMR MutL activity correcting base-base mismatches as well as IDLs. The heterodimer binds double strand DNA independently of a mismatch with positive cooperativity and has more than one DNA binding site. Forms a ternary complex with either the MSH2-MSH6 (MutSalpha) or the MSH2-MSH3 heterodimer (MutSbeta), which recognize and bind to mismatch DNA. Ternary complex formation is promoted by ATP binding.

It is found in the nucleus. Functionally, required for DNA mismatch repair (MMR), correcting base-base mismatches and insertion-deletion loops (IDLs) resulting from DNA replication, DNA damage or from recombination events between non-identical sequences during meiosis. Component of the MutLalpha heterodimer that forms a ternary complex with the MutS heterodimers, which initially recognize the DNA mismatches. This complex is thought to be responsible for directing the downstream MMR events, including strand discrimination, excision, and resynthesis. Plays a major role in maintaining the genetic stability of simple sequence repeats and in the repair of heteroduplex sites present in meiotic recombination intermediates. In Saccharomyces cerevisiae (strain ATCC 204508 / S288c) (Baker's yeast), this protein is DNA mismatch repair protein PMS1 (PMS1).